Here is a 227-residue protein sequence, read N- to C-terminus: Peroxiredoxin 1 (227 aa).

The Thioredoxin domain occupies 6-161; it reads PLIGEKFPEM…ILRLIKSLQM (156 aa). Residue cysteine 48 is the Cysteine sulfenic acid (-SOH) intermediate of the active site. Position 124 (arginine 124) interacts with substrate.

It belongs to the peroxiredoxin family. Prx6 subfamily. As to quaternary structure, homodecamer. Pentamer of dimers that assemble into a ring structure.

The protein localises to the cytoplasm. The enzyme catalyses a hydroperoxide + [thioredoxin]-dithiol = an alcohol + [thioredoxin]-disulfide + H2O. In terms of biological role, thiol-specific peroxidase that catalyzes the reduction of hydrogen peroxide and organic hydroperoxides to water and alcohols, respectively. Plays a role in cell protection against oxidative stress by detoxifying peroxides. The polypeptide is Peroxiredoxin 1 (Picrophilus torridus (strain ATCC 700027 / DSM 9790 / JCM 10055 / NBRC 100828 / KAW 2/3)).